Consider the following 44-residue polypeptide: Photosystem II reaction center protein J (44 aa).

Residues 12–32 (IPLWIVGFVVGSLALGLLGIL) traverse the membrane as a helical segment.

Belongs to the PsbJ family. As to quaternary structure, PSII is composed of 1 copy each of membrane proteins PsbA, PsbB, PsbC, PsbD, PsbE, PsbF, PsbH, PsbI, PsbJ, PsbK, PsbL, PsbM, PsbT, PsbY, PsbZ, Psb30/Ycf12, at least 3 peripheral proteins of the oxygen-evolving complex and a large number of cofactors. It forms dimeric complexes.

The protein localises to the plastid. It localises to the chloroplast thylakoid membrane. Its function is as follows. One of the components of the core complex of photosystem II (PSII). PSII is a light-driven water:plastoquinone oxidoreductase that uses light energy to abstract electrons from H(2)O, generating O(2) and a proton gradient subsequently used for ATP formation. It consists of a core antenna complex that captures photons, and an electron transfer chain that converts photonic excitation into a charge separation. The chain is Photosystem II reaction center protein J from Bigelowiella natans (Pedinomonas minutissima).